The chain runs to 801 residues: Cadherin-20 (801 aa).

Residues 1–34 (MWTSGRMSNAKNWLGLGMSLYFWGLMDLTTTVLS) form the signal peptide. The propeptide occupies 35–59 (DTPTPQGELEALLSDKPQSHQRTKR). Topologically, residues 60-619 (SWVWNQFFVL…AYMLPVSLSR (560 aa)) are extracellular. 5 Cadherin domains span residues 61–165 (WVWN…EPKF), 166–274 (LDGP…PPRF), 275–389 (PQKH…PPVF), 390–494 (EPGF…APEF), and 494–610 (FPRF…SPEA). A glycan (N-linked (GlcNAc...) asparagine) is linked at Asn261. N-linked (GlcNAc...) asparagine glycosylation is found at Asn420, Asn461, and Asn542. A helical transmembrane segment spans residues 620–640 (GALIAILACIFVLLVLVLLIL). Topologically, residues 641-801 (SMRRHRKQPY…GASEGPAPLW (161 aa)) are cytoplasmic.

Expressed in placenta, adult brain, and fetal brain.

The protein localises to the cell membrane. In terms of biological role, cadherins are calcium-dependent cell adhesion proteins. They preferentially interact with themselves in a homophilic manner in connecting cells; cadherins may thus contribute to the sorting of heterogeneous cell types. The protein is Cadherin-20 (CDH20) of Homo sapiens (Human).